Here is a 299-residue protein sequence, read N- to C-terminus: Porphobilinogen deaminase (299 aa).

C242 is modified (S-(dipyrrolylmethanemethyl)cysteine).

Belongs to the HMBS family. Monomer. The cofactor is dipyrromethane.

The catalysed reaction is 4 porphobilinogen + H2O = hydroxymethylbilane + 4 NH4(+). It functions in the pathway porphyrin-containing compound metabolism; protoporphyrin-IX biosynthesis; coproporphyrinogen-III from 5-aminolevulinate: step 2/4. Its function is as follows. Tetrapolymerization of the monopyrrole PBG into the hydroxymethylbilane pre-uroporphyrinogen in several discrete steps. This Rickettsia prowazekii (strain Madrid E) protein is Porphobilinogen deaminase (hemC).